The chain runs to 935 residues: Protein translocase subunit SecA (935 aa).

Residues Q86, G104–T108, and D494 each bind ATP. Residues E879–H935 form a disordered region.

Belongs to the SecA family. Monomer and homodimer. Part of the essential Sec protein translocation apparatus which comprises SecA, SecYEG and auxiliary proteins SecDF. Other proteins may also be involved.

The protein localises to the cell membrane. Its subcellular location is the cytoplasm. The enzyme catalyses ATP + H2O + cellular proteinSide 1 = ADP + phosphate + cellular proteinSide 2.. Part of the Sec protein translocase complex. Interacts with the SecYEG preprotein conducting channel. Has a central role in coupling the hydrolysis of ATP to the transfer of proteins into and across the cell membrane, serving as an ATP-driven molecular motor driving the stepwise translocation of polypeptide chains across the membrane. The chain is Protein translocase subunit SecA from Leifsonia xyli subsp. xyli (strain CTCB07).